A 494-amino-acid chain; its full sequence is Gabija protein GajB (494 aa).

The UvrD-like helicase ATP-binding domain occupies 1–229 (MSREQIIKDG…YHLTSNFRCC (229 aa)). 17-24 (AGAGSGKT) provides a ligand contact to ATP.

This sequence belongs to the helicase family. In terms of assembly, homodimer. Interacts with GajA; 2 GajB dimers dock at opposite sides of the GajA complex to form a 4:4 GajA-GajB assembly (GajAB). GajAB interacts with Bacillus phage Phi3T Gad1 protein; this interaction forms a 4:4:8 GajAB-Gad1 complex and leads to GajAB inhibition.

Its function is as follows. Component of antiviral defense system Gabija type I, composed of GajA and GajB. Expression of Gabija type I in B.subtilis (strain BEST7003) confers resistance to phages phi105, phi29, rho14, SpBeta and SBSphiC. Expression of Gabija type I in E.coli B (strain ATCC 11303) confers resistance to phage T7. May be a helicase or contribute to GajA activation. This chain is Gabija protein GajB, found in Bacillus cereus (strain VD045).